Reading from the N-terminus, the 342-residue chain is Succinoglycan biosynthesis protein ExoU (342 aa).

Belongs to the glycosyltransferase 2 family.

It localises to the cytoplasm. It participates in glycan metabolism; exopolysaccharide biosynthesis. Functionally, glycosyltransferase required for the synthesis of succinoglycan (EPS I). Needed for the addition of the sixth sugar (glucose), catalyzes the formation of a beta-1,6 linkage between the fifth and sixth sugar. The sequence is that of Succinoglycan biosynthesis protein ExoU (exoU) from Rhizobium meliloti (strain 1021) (Ensifer meliloti).